A 249-amino-acid polypeptide reads, in one-letter code: Transmembrane protein 51 (249 aa).

Transmembrane regions (helical) follow at residues 17–37 and 64–84; these read IGLGMLVLGVIMAMWNLVPGF and VAYVLVGAGMMLLLLAICLSI. Disordered stretches follow at residues 95–126, 161–199, and 213–249; these read ELARIQQQAGTVPHSQEEDSQEEEEDVSSRYY, TGLDEATPTSTRAETETSPGHAPDRQNSKLAKRLKPLKV, and RITLPDKNVPPPSIEPLTPPPLYDEVQAKAPDARPPD. A compositionally biased stretch (polar residues) spans 99–108; sequence IQQQAGTVPH. 4 positions are modified to phosphoserine: Ser109, Ser114, Ser178, and Ser188. The span at 167–178 shows a compositional bias: polar residues; that stretch reads TPTSTRAETETS. Over residues 190 to 199 the composition is skewed to basic residues; the sequence is LAKRLKPLKV. Over residues 220 to 234 the composition is skewed to pro residues; it reads NVPPPSIEPLTPPPL.

It localises to the membrane. In Mus musculus (Mouse), this protein is Transmembrane protein 51 (Tmem51).